The chain runs to 391 residues: Elongation factor Tu (391 aa).

The 192-residue stretch at 10–201 (KPHVNIGTIG…AVDDYIPTPE (192 aa)) folds into the tr-type G domain. The G1 stretch occupies residues 19 to 26 (GHVDHGKT). Residue 19-26 (GHVDHGKT) participates in GTP binding. Residue T26 participates in Mg(2+) binding. The interval 55–59 (GITIS) is G2. The G3 stretch occupies residues 76–79 (DCPG). Residues 76-80 (DCPGH) and 131-134 (NKCD) contribute to the GTP site. The interval 131–134 (NKCD) is G4. The tract at residues 169-171 (SAL) is G5.

It belongs to the TRAFAC class translation factor GTPase superfamily. Classic translation factor GTPase family. EF-Tu/EF-1A subfamily. In terms of assembly, monomer.

The protein localises to the cytoplasm. It carries out the reaction GTP + H2O = GDP + phosphate + H(+). In terms of biological role, GTP hydrolase that promotes the GTP-dependent binding of aminoacyl-tRNA to the A-site of ribosomes during protein biosynthesis. The sequence is that of Elongation factor Tu from Brucella anthropi (strain ATCC 49188 / DSM 6882 / CCUG 24695 / JCM 21032 / LMG 3331 / NBRC 15819 / NCTC 12168 / Alc 37) (Ochrobactrum anthropi).